Reading from the N-terminus, the 459-residue chain is Neuronal acetylcholine receptor subunit beta-2 (459 aa).

At Leu1–Lys203 the chain is on the extracellular side. N-linked (GlcNAc...) asparagine glycans are attached at residues Asn21 and Asn138. Cys125 and Cys139 are joined by a disulfide. Residues Pro204 to Leu228 form a helical membrane-spanning segment. Topologically, residues Pro229 to Lys235 are cytoplasmic. Residues Val236–Ser254 traverse the membrane as a helical segment. At Lys255–Lys269 the chain is on the extracellular side. Residues Tyr270 to Val291 form a helical membrane-spanning segment. The Cytoplasmic portion of the chain corresponds to His292–Arg421. Residues Leu422–Val440 form a helical membrane-spanning segment.

The protein belongs to the ligand-gated ion channel (TC 1.A.9) family. Acetylcholine receptor (TC 1.A.9.1) subfamily. Beta-2/CHRNB2 sub-subfamily. In terms of assembly, neuronal AChR is a heteropentamer composed of two different types of subunits: alpha and beta. CHRNB2/Beta-2 subunit can be combined to CHRNA2/alpha-2, CHRNA3/alpha-3 or CHRNA4/alpha-4, CHRNA5/alpha-5, CHRNA6/alpha-6 and CHRNB3/beta-3 to give rise to functional receptors.

It is found in the synaptic cell membrane. It localises to the cell membrane. The catalysed reaction is Ca(2+)(in) = Ca(2+)(out). It catalyses the reaction K(+)(in) = K(+)(out). The enzyme catalyses Na(+)(in) = Na(+)(out). With respect to regulation, activated by a myriad of ligands such as acetylcholine, cytisine, nicotine, choline and epibatidine. nAChR activity is inhibited by the antagonist alpha-conotoxins BuIA, PnIA, PnIC, GID and MII, small disulfide-constrained peptides from cone snails. Component of neuronal acetylcholine receptors (nAChRs) that function as pentameric, ligand-gated cation channels with high calcium permeability among other activities. nAChRs are excitatory neurotrasnmitter receptors formed by a collection of nAChR subunits known to mediate synaptic transmission in the nervous system and the neuromuscular junction. Each nAchR subunit confers differential attributes to channel properties, including activation, deactivation and desensitization kinetics, pH sensitivity, cation permeability, and binding to allosteric modulators. CHRNB2 forms heteropentameric neuronal acetylcholine receptors with CHRNA2, CHRNA3, CHRNA4 and CHRNA6, as well as CHRNA5 and CHRNB3 as accesory subunits. The sequence is that of Neuronal acetylcholine receptor subunit beta-2 (chrnb2) from Carassius auratus (Goldfish).